The sequence spans 188 residues: dCTP deaminase (188 aa).

Residues 111-116, 135-137, glutamine 156, tyrosine 170, and glutamine 180 each bind dCTP; these read KSTYAR and TLE. Glutamate 137 acts as the Proton donor/acceptor in catalysis.

This sequence belongs to the dCTP deaminase family. In terms of assembly, homotrimer.

It carries out the reaction dCTP + H2O + H(+) = dUTP + NH4(+). It participates in pyrimidine metabolism; dUMP biosynthesis; dUMP from dCTP (dUTP route): step 1/2. Catalyzes the deamination of dCTP to dUTP. The protein is dCTP deaminase of Chromohalobacter salexigens (strain ATCC BAA-138 / DSM 3043 / CIP 106854 / NCIMB 13768 / 1H11).